Reading from the N-terminus, the 154-residue chain is Aspartate carbamoyltransferase regulatory chain (154 aa).

Residues cysteine 109, cysteine 114, cysteine 138, and cysteine 141 each contribute to the Zn(2+) site.

The protein belongs to the PyrI family. As to quaternary structure, contains catalytic and regulatory chains. Zn(2+) serves as cofactor.

In terms of biological role, involved in allosteric regulation of aspartate carbamoyltransferase. This is Aspartate carbamoyltransferase regulatory chain from Aliivibrio salmonicida (strain LFI1238) (Vibrio salmonicida (strain LFI1238)).